The primary structure comprises 217 residues: 3,4-dihydroxy-2-butanone 4-phosphate synthase (217 aa).

D-ribulose 5-phosphate-binding positions include 37 to 38 (RE), D42, 150 to 154 (RRGHT), and E174. Residue E38 participates in Mg(2+) binding. H153 provides a ligand contact to Mg(2+).

Belongs to the DHBP synthase family. Homodimer. Requires Mg(2+) as cofactor. Mn(2+) is required as a cofactor.

The enzyme catalyses D-ribulose 5-phosphate = (2S)-2-hydroxy-3-oxobutyl phosphate + formate + H(+). The protein operates within cofactor biosynthesis; riboflavin biosynthesis; 2-hydroxy-3-oxobutyl phosphate from D-ribulose 5-phosphate: step 1/1. Its function is as follows. Catalyzes the conversion of D-ribulose 5-phosphate to formate and 3,4-dihydroxy-2-butanone 4-phosphate. The protein is 3,4-dihydroxy-2-butanone 4-phosphate synthase of Shewanella woodyi (strain ATCC 51908 / MS32).